Here is a 255-residue protein sequence, read N- to C-terminus: Acetylglutamate kinase (255 aa).

Substrate is bound by residues 40-41 (GG), Arg-62, and Asn-153.

It belongs to the acetylglutamate kinase family. ArgB subfamily.

The protein localises to the cytoplasm. The enzyme catalyses N-acetyl-L-glutamate + ATP = N-acetyl-L-glutamyl 5-phosphate + ADP. It participates in amino-acid biosynthesis; L-arginine biosynthesis; N(2)-acetyl-L-ornithine from L-glutamate: step 2/4. Its function is as follows. Catalyzes the ATP-dependent phosphorylation of N-acetyl-L-glutamate. The polypeptide is Acetylglutamate kinase (Bacillus cereus (strain AH820)).